The chain runs to 442 residues: Syndecan-3 (442 aa).

Disordered regions lie at residues M1–G24 and R57–F87. Over M1 to V387 the chain is Extracellular. Residues H13 to G24 are compositionally biased toward gly residues. Acidic residues predominate over residues G63–D77. Residues S80, S82, S84, and S91 are each glycosylated (O-linked (Xyl...) (glycosaminoglycan) serine). S108 is a glycosylation site (O-linked (GalNAc) serine; by GALNT13). O-linked (GalNAc) threonine; by GALNT13 glycans are attached at residues T109 and T110. 3 disordered regions span residues E150–D173, T225–Q326, and A340–S367. 3 stretches are compositionally biased toward low complexity: residues A156–D173, T225–V238, and T275–T286. O-linked (GalNAc) serine; by GALNT13 glycosylation occurs at S160. T161, T162, and T169 each carry an O-linked (GalNAc) threonine; by GALNT13 glycan. S170 is a glycosylation site (O-linked (GalNAc) serine; by GALNT13). An O-linked (GalNAc) threonine; by GALNT13 glycan is attached at T171. The span at V288–T299 shows a compositional bias: polar residues. O-linked (Xyl...) (glycosaminoglycan) serine glycans are attached at residues S314 and S367. The helical transmembrane segment at A388–I408 threads the bilayer. 4 positions are modified to phosphotyrosine: Y409, Y419, Y431, and Y441. The Cytoplasmic segment spans residues Y409–A442. A disordered region spans residues Y419 to A442. Basic and acidic residues predominate over residues K433–A442.

Belongs to the syndecan proteoglycan family. As to quaternary structure, interacts with TIAM1. Interacts with PTN (via heparan sulfate chains); this interaction mediates the neurite outgrowth-promoting signal from PTN to the cytoskeleton of growing neurites; this interaction mediates osteoblast recruitment. Interacts with MDK; this interaction induces SDC3 clustering; this interaction induces neuronal cell adhesion and neurite outgrowth. O-glycosylated within the Thr/Ser-rich region which could interact with lectin domains on other molecules. In terms of tissue distribution, expressed in the nervous system, the adrenal gland, and the spleen.

The protein resides in the cell membrane. Functionally, cell surface proteoglycan that may bear heparan sulfate. May have a role in the organization of cell shape by affecting the actin cytoskeleton, possibly by transferring signals from the cell surface in a sugar-dependent mechanism. In Homo sapiens (Human), this protein is Syndecan-3 (SDC3).